Here is a 38-residue protein sequence, read N- to C-terminus: Photosystem II reaction center protein L (38 aa).

A helical membrane pass occupies residues 17 to 37 (SLFWGLLLIFVLAVLFSSYFF).

It belongs to the PsbL family. PSII is composed of 1 copy each of membrane proteins PsbA, PsbB, PsbC, PsbD, PsbE, PsbF, PsbH, PsbI, PsbJ, PsbK, PsbL, PsbM, PsbT, PsbX, PsbY, PsbZ, Psb30/Ycf12, at least 3 peripheral proteins of the oxygen-evolving complex and a large number of cofactors. It forms dimeric complexes.

Its subcellular location is the plastid. The protein localises to the chloroplast thylakoid membrane. One of the components of the core complex of photosystem II (PSII). PSII is a light-driven water:plastoquinone oxidoreductase that uses light energy to abstract electrons from H(2)O, generating O(2) and a proton gradient subsequently used for ATP formation. It consists of a core antenna complex that captures photons, and an electron transfer chain that converts photonic excitation into a charge separation. This subunit is found at the monomer-monomer interface and is required for correct PSII assembly and/or dimerization. This is Photosystem II reaction center protein L from Porphyra purpurea (Red seaweed).